Consider the following 321-residue polypeptide: Epiphycan (321 aa).

The signal sequence occupies residues 1–19 (MKALARLIVGLLILDAAVT). T60 is a glycosylation site (O-linked (GalNAc...) threonine). An O-linked (Xyl...) (dermatan sulfate) serine glycan is attached at S64. The disordered stretch occupies residues 64-100 (SGNRELLTPPPQPEEAEEEEEEESTPRLIDGSSPQEP). Positions 77–86 (EEAEEEEEEE) are enriched in acidic residues. O-linked (GalNAc...) serine glycosylation occurs at S95. An LRRNT domain is found at 105–142 (VLGPQTNEDFPTCLLCTCISTTVYCDDHELDAIPPLPK). A disulfide bridge links C117 with C129. LRR repeat units lie at residues 143–164 (NTAY…DFAS), 167–188 (DLRR…AFRK), 191–212 (QLRE…PTTL), 237–257 (DLHH…PLPE), and 258–279 (NLRA…TFCN). A disulfide bridge links C278 with C311. N-linked (GlcNAc...) asparagine glycosylation occurs at N282. One copy of the LRR 6 repeat lies at 289 to 309 (ALEDIRLDGNPINLSKTPQAY).

It belongs to the small leucine-rich proteoglycan (SLRP) family. SLRP class III subfamily. In terms of processing, a long and a short form present in approximately equimolar amounts may arise by proteolysis or cleavage by exopeptidases. Post-translationally, the O-linked polysaccharides on Thr-60 and Ser-95 are probably the mucin type linked to GalNAc. There is one glycosaminoglycan chain, known to be dermatan sulfate, and it is probably the O-glycosylation at Ser-64. Preferentially expressed in the zone of flattened chondrocytes of the developing limb cartilage.

It is found in the secreted. It localises to the extracellular space. The protein localises to the extracellular matrix. In terms of biological role, may have a role in bone formation and also in establishing the ordered structure of cartilage through matrix organization. This Bos taurus (Bovine) protein is Epiphycan (EPYC).